The following is a 134-amino-acid chain: Rhoptry antigen protein (134 aa).

Disordered stretches follow at residues methionine 21 to lysine 82 and glutamine 96 to leucine 134. Positions lysine 29–aspartate 38 are enriched in polar residues. Positions glutamate 39–glycine 54 are enriched in low complexity. The segment covering glycine 57–methionine 69 has biased composition (basic and acidic residues). Residues proline 102 to arginine 113 show a composition bias toward basic residues. A compositionally biased stretch (basic and acidic residues) spans aspartate 114–lysine 126.

The chain is Rhoptry antigen protein from Plasmodium falciparum.